A 113-amino-acid polypeptide reads, in one-letter code: Hemerythrin (113 aa).

Histidine 25, histidine 54, glutamate 58, histidine 73, histidine 77, histidine 101, and aspartate 106 together coordinate Fe cation.

Belongs to the hemerythrin family. As to quaternary structure, homotrimer.

Hemerythrin is a respiratory protein in blood cells of certain marine worms. The oxygen-binding site in each chain contains two iron atoms. The sequence is that of Hemerythrin from Siphonosoma cumanense (Sipunculan worm).